We begin with the raw amino-acid sequence, 450 residues long: Probable glucoamylase (450 aa).

The N-terminal stretch at 1–16 (MRTYWLFLLLGGVVSA) is a signal peptide. Residues 17 to 28 (ESLLSPNKRSKE) constitute a propeptide that is removed on maturation. A substrate-binding site is contributed by Trp147. Residue Asp203 is the Proton acceptor of the active site. Glu206 functions as the Proton donor in the catalytic mechanism. 2 N-linked (GlcNAc...) asparagine glycosylation sites follow: Asn383 and Asn409.

Belongs to the glycosyl hydrolase 15 family.

The catalysed reaction is Hydrolysis of terminal (1-&gt;4)-linked alpha-D-glucose residues successively from non-reducing ends of the chains with release of beta-D-glucose.. The protein is Probable glucoamylase (meu17) of Schizosaccharomyces pombe (strain 972 / ATCC 24843) (Fission yeast).